Consider the following 144-residue polypeptide: Large ribosomal subunit protein uL16 (144 aa).

This sequence belongs to the universal ribosomal protein uL16 family. In terms of assembly, part of the 50S ribosomal subunit.

Its function is as follows. Binds 23S rRNA and is also seen to make contacts with the A and possibly P site tRNAs. The protein is Large ribosomal subunit protein uL16 of Enterococcus faecalis (strain ATCC 700802 / V583).